The chain runs to 124 residues: Large ribosomal subunit protein bL12 (124 aa).

This sequence belongs to the bacterial ribosomal protein bL12 family. Homodimer. Part of the ribosomal stalk of the 50S ribosomal subunit. Forms a multimeric L10(L12)X complex, where L10 forms an elongated spine to which 2 to 4 L12 dimers bind in a sequential fashion. Binds GTP-bound translation factors.

Its function is as follows. Forms part of the ribosomal stalk which helps the ribosome interact with GTP-bound translation factors. Is thus essential for accurate translation. The polypeptide is Large ribosomal subunit protein bL12 (Nitrosomonas europaea (strain ATCC 19718 / CIP 103999 / KCTC 2705 / NBRC 14298)).